The chain runs to 1093 residues: Regulator of nonsense transcripts 1 homolog (1093 aa).

The segment at 42–79 (YGVYGGRGPRGNGRRRHDDDDNETEVLDDDDDESLASV) is disordered. Over residues 61–75 (DDNETEVLDDDDDES) the composition is skewed to acidic residues. Positions 95 to 252 (EKELPPHACA…AKLEEMWKEA (158 aa)) constitute a Upf1 CH-rich domain. 12 residues coordinate Zn(2+): cysteine 103, cysteine 106, cysteine 117, cysteine 120, cysteine 125, histidine 135, histidine 139, histidine 145, cysteine 163, cysteine 166, cysteine 189, and cysteine 193. Positions 103–135 (CAYCGIHSPSSVVKCLTCNKWFCSAKGSAFSSH) are C3H. Residues 117–145 (CLTCNKWFCSAKGSAFSSHIVNHLVRARH) form a CC/SHH/C region. Residues 163-193 (CYNCGTKNVFILGFIPAKSDTVVVLLCRQPC) form a C4 region. Residues glutamine 460, 480–484 (GTGKT), glutamine 650, tyrosine 687, and glutamate 818 each bind ATP.

It belongs to the DNA2/NAM7 helicase family.

The protein resides in the cytoplasm. The catalysed reaction is ATP + H2O = ADP + phosphate + H(+). Functionally, RNA-dependent helicase required for nonsense-mediated decay (NMD) of aberrant mRNAs containing premature stop codons and modulates the expression level of normal mRNAs. Also capable of unwinding double-stranded DNA and translocating on single-stranded DNA. In Neurospora crassa (strain ATCC 24698 / 74-OR23-1A / CBS 708.71 / DSM 1257 / FGSC 987), this protein is Regulator of nonsense transcripts 1 homolog.